We begin with the raw amino-acid sequence, 432 residues long: 3-chlorobenzoate-3,4-dioxygenase oxygenase subunit (432 aa).

One can recognise a Rieske domain in the interval 27–133; sequence WIPALKSTEL…VKEMAGVVWV (107 aa). The [2Fe-2S] cluster site is built by Cys-69, His-71, Cys-88, and His-91. Residues His-180 and His-185 each contribute to the Fe cation site.

The protein belongs to the bacterial ring-hydroxylating dioxygenase alpha subunit family. As to quaternary structure, this dioxygenase system consists of two proteins: an oxygenase and an oxygenase reductase. It depends on [2Fe-2S] cluster as a cofactor. Requires Fe cation as cofactor.

This Comamonas testosteroni (Pseudomonas testosteroni) protein is 3-chlorobenzoate-3,4-dioxygenase oxygenase subunit (cbaA).